We begin with the raw amino-acid sequence, 305 residues long: tRNA uridine(34) hydroxylase (305 aa).

In terms of domain architecture, Rhodanese spans 125 to 219 (ADENTVVVDK…YLEEVPREQS (95 aa)). The Cysteine persulfide intermediate role is filled by C179.

It belongs to the TrhO family.

It carries out the reaction uridine(34) in tRNA + AH2 + O2 = 5-hydroxyuridine(34) in tRNA + A + H2O. Functionally, catalyzes oxygen-dependent 5-hydroxyuridine (ho5U) modification at position 34 in tRNAs. This is tRNA uridine(34) hydroxylase from Brucella abortus (strain S19).